A 1164-amino-acid polypeptide reads, in one-letter code: DNA-directed RNA polymerase 132 kDa polypeptide (1164 aa).

It belongs to the RNA polymerase beta chain family. As to quaternary structure, the DNA-dependent RNA polymerase used for intermediate and late genes expression consists of eight subunits (147) kDa, (133) kDa, (35) kDa, (30) kDa, (22) kDa, (19) kDa, (18) kDa and (7) kDa totalling more than 500 kDa in mass. The same holoenzyme, with the addition of the transcription-specificity factor RAP94, is used for early gene expression.

It is found in the virion. It carries out the reaction RNA(n) + a ribonucleoside 5'-triphosphate = RNA(n+1) + diphosphate. In terms of biological role, part of the DNA-dependent RNA polymerase which catalyzes the transcription of viral DNA into RNA using the four ribonucleoside triphosphates as substrates. Responsible for the transcription of early, intermediate and late genes. DNA-dependent RNA polymerase associates with the early transcription factor (ETF), itself composed of D6 and A7, thereby allowing the early genes transcription. Late transcription, and probably also intermediate transcription, require newly synthesized RNA polymerase. The chain is DNA-directed RNA polymerase 132 kDa polypeptide (RPO132) from Mus musculus (Mouse).